The sequence spans 141 residues: Large ribosomal subunit protein uL11 (141 aa).

It belongs to the universal ribosomal protein uL11 family. As to quaternary structure, part of the ribosomal stalk of the 50S ribosomal subunit. Interacts with L10 and the large rRNA to form the base of the stalk. L10 forms an elongated spine to which L12 dimers bind in a sequential fashion forming a multimeric L10(L12)X complex. In terms of processing, one or more lysine residues are methylated.

Functionally, forms part of the ribosomal stalk which helps the ribosome interact with GTP-bound translation factors. The sequence is that of Large ribosomal subunit protein uL11 from Streptococcus agalactiae serotype Ia (strain ATCC 27591 / A909 / CDC SS700).